The following is a 123-amino-acid chain: Large ribosomal subunit protein uL14 (123 aa).

Belongs to the universal ribosomal protein uL14 family. In terms of assembly, part of the 50S ribosomal subunit. Forms a cluster with proteins L3 and L19. In the 70S ribosome, L14 and L19 interact and together make contacts with the 16S rRNA in bridges B5 and B8.

Binds to 23S rRNA. Forms part of two intersubunit bridges in the 70S ribosome. The polypeptide is Large ribosomal subunit protein uL14 (Zymomonas mobilis subsp. mobilis (strain ATCC 31821 / ZM4 / CP4)).